The following is a 690-amino-acid chain: Eukaryotic translation initiation factor 3 subunit B (690 aa).

Basic and acidic residues predominate over residues 1–11 (MAKKKSEEHSG). Residues 1–33 (MAKKKSEEHSGTDANDSDYQEEPNFDDPPGFVD) form a disordered region. Acidic residues predominate over residues 15–25 (NDSDYQEEPNF). The 85-residue stretch at 57-141 (SVVVVDNIPK…HTFAVNLFTD (85 aa)) folds into the RRM domain. WD repeat units follow at residues 207–246 (TRER…KIQK), 293–331 (DGMS…LLDL), 334–369 (IKIP…TLME), 442–484 (EIRE…KPSL), and 530–575 (PDHF…IKRT). Residues 595–645 (EEKQKEIKKNLKKYYAAFEQKDRLRLTRASKELLEKRSQLRETFMEYRNKR) are a coiled coil.

Belongs to the eIF-3 subunit B family. As to quaternary structure, component of the eukaryotic translation initiation factor 3 (eIF-3) complex. The eIF-3 complex interacts with pix. Interacts with mxt.

Its subcellular location is the cytoplasm. In terms of biological role, RNA-binding component of the eukaryotic translation initiation factor 3 (eIF-3) complex, which is involved in protein synthesis of a specialized repertoire of mRNAs and, together with other initiation factors, stimulates binding of mRNA and methionyl-tRNAi to the 40S ribosome. The eIF-3 complex specifically targets and initiates translation of a subset of mRNAs involved in cell proliferation. This is Eukaryotic translation initiation factor 3 subunit B from Drosophila melanogaster (Fruit fly).